The sequence spans 250 residues: 5-oxoprolinase subunit A 2 (250 aa).

This sequence belongs to the LamB/PxpA family. In terms of assembly, forms a complex composed of PxpA, PxpB and PxpC.

The enzyme catalyses 5-oxo-L-proline + ATP + 2 H2O = L-glutamate + ADP + phosphate + H(+). Functionally, catalyzes the cleavage of 5-oxoproline to form L-glutamate coupled to the hydrolysis of ATP to ADP and inorganic phosphate. This chain is 5-oxoprolinase subunit A 2, found in Bordetella bronchiseptica (strain ATCC BAA-588 / NCTC 13252 / RB50) (Alcaligenes bronchisepticus).